Reading from the N-terminus, the 522-residue chain is MEELQGYFEKDRSRQQPFLYPLLFQEYIYALAHDRGLNRNGSIFYEPLEVFGYDSKSSLALVKRLITRIYQQHFFLSSVNDSNQNKFVGHHHTNFFYSRFYSQMISEGFTIIVEIPFSLQLVSYFKEKEIQKSHNLRSIHSIFPFLEDKLLHLNYVSDILIPHPIHMEILVQILQCWIQDVPLLHFLRFFLHEYNNWNSFFITQNKSIYLFSKETKRLFRFLYNSYVYECEFLFVFLRKHSSYLRFTSFRTFLERRYFYGKMEHLQTEHLIIVCCDXFNGTLWSFKDPFMHYARCQGKAILVSKGTHLLMKKWKYNFVNLWQYYFHFWYQSYRIHINQLSKHSFHFXGYFSSLLKNSSTVRNKMLDNSFLIDTLTTKFDTAVPVIFLIVSLSKAQFCTVSGHPISKPIWTDLSDSGIIERFGRICRNLSHYHSGSSKKQGLYRIKYILRLSCARTLAGKHKSTVRTFLQRLGSRLLEEFFTEGEQDLSLILPKAIPFPFQGSHRERIWYLDIIRINDLMNRL.

Belongs to the intron maturase 2 family. MatK subfamily.

Its subcellular location is the plastid. It is found in the chloroplast. In terms of biological role, usually encoded in the trnK tRNA gene intron. Probably assists in splicing its own and other chloroplast group II introns. This Watsonia angusta protein is Maturase K.